Here is a 171-residue protein sequence, read N- to C-terminus: Shikimate kinase (171 aa).

13 to 18 (GVGKST) provides a ligand contact to ATP. Serine 17 contributes to the Mg(2+) binding site. Residues aspartate 35, arginine 59, and glycine 81 each coordinate substrate. Residue arginine 118 coordinates ATP. Arginine 136 serves as a coordination point for substrate. ATP is bound at residue arginine 153.

This sequence belongs to the shikimate kinase family. Monomer. The cofactor is Mg(2+).

Its subcellular location is the cytoplasm. It catalyses the reaction shikimate + ATP = 3-phosphoshikimate + ADP + H(+). Its pathway is metabolic intermediate biosynthesis; chorismate biosynthesis; chorismate from D-erythrose 4-phosphate and phosphoenolpyruvate: step 5/7. In terms of biological role, catalyzes the specific phosphorylation of the 3-hydroxyl group of shikimic acid using ATP as a cosubstrate. This Streptomyces avermitilis (strain ATCC 31267 / DSM 46492 / JCM 5070 / NBRC 14893 / NCIMB 12804 / NRRL 8165 / MA-4680) protein is Shikimate kinase.